A 128-amino-acid polypeptide reads, in one-letter code: Cionin (128 aa).

The first 22 residues, 1–22 (MGSNIVIYFSIIVIVTLNVNGV), serve as a signal peptide directing secretion. A propeptide spanning residues 23 to 108 (PASDLFKSVS…NQGHMQRMDR (86 aa)) is cleaved from the precursor. 2 positions are modified to sulfotyrosine: Tyr110 and Tyr111. Position 116 is a phenylalanine amide (Phe116). Residues 120-128 (AIEDVDYEY) constitute a propeptide that is removed on maturation.

Belongs to the gastrin/cholecystokinin family. In terms of tissue distribution, expressed in both the gut and the neural ganglion.

It is found in the secreted. The polypeptide is Cionin (Ciona intestinalis (Transparent sea squirt)).